A 159-amino-acid chain; its full sequence is Cytochrome c-type biogenesis protein CcmE (159 aa).

Residues 1-8 (MNIRRKNR) lie on the Cytoplasmic side of the membrane. Residues 9–29 (LWIACAVLAGLALTITLVLYA) form a helical; Signal-anchor for type II membrane protein membrane-spanning segment. Topologically, residues 30-159 (LRSNIDLFYT…PESVYKDKAS (130 aa)) are periplasmic. The heme site is built by His-130 and Tyr-134. Residues 130 to 159 (HDENYTPPEVEKAMQENHRRPESVYKDKAS) form a disordered region.

It belongs to the CcmE/CycJ family.

The protein resides in the cell inner membrane. Its function is as follows. Heme chaperone required for the biogenesis of c-type cytochromes. Transiently binds heme delivered by CcmC and transfers the heme to apo-cytochromes in a process facilitated by CcmF and CcmH. In Citrobacter koseri (strain ATCC BAA-895 / CDC 4225-83 / SGSC4696), this protein is Cytochrome c-type biogenesis protein CcmE.